Reading from the N-terminus, the 376-residue chain is MARVEL domain-containing protein 3 (376 aa).

Basic and acidic residues predominate over residues 1–95 (MKNTSGHREP…EKSRQSRARP (95 aa)). Residues 1-134 (MKNTSGHREP…GRRGLESERA (134 aa)) are disordered. Residues 1-173 (MKNTSGHREP…HKCRYLCTGR (173 aa)) are Cytoplasmic-facing. Positions 168 to 361 (YLCTGRACWQ…GAVLAFRGYR (194 aa)) constitute an MARVEL domain. A helical membrane pass occupies residues 174 to 194 (ACWQMLKALLNLLILACSSVS). At 195 to 247 (YNSTGGYTGITSLGGIYYYQYGGAYSGFDGADGERAQQLDVQFYQLKLPTVTA) the chain is on the extracellular side. The helical transmembrane segment at 248–268 (AMAYSGALMTFSCLTLLAGAL) threads the bilayer. Residues 269–275 (RVPWHCP) are Cytoplasmic-facing. Residues 276–296 (LWLVIEGLMDALIAGAYVPGL) form a helical membrane-spanning segment. The Extracellular segment spans residues 297-335 (YFFFQHLSAAYSSDVCKERETLYQSKGYSGFNCGVHGGD). The chain crosses the membrane as a helical span at residues 336 to 356 (IGAGVFAAMAIGVFAVGAVLA). The Cytoplasmic segment spans residues 357–376 (FRGYRKVKKLKEKPTEMLEF).

As to expression, widely expressed with highest levels in small intestine, colon, stomach and lung. Liver expresses only isoform 2.

The protein localises to the membrane. The protein resides in the cell junction. Its subcellular location is the tight junction. As a component of tight junctions, plays a role in paracellular ion conductivity. The polypeptide is MARVEL domain-containing protein 3 (Marveld3) (Mus musculus (Mouse)).